The sequence spans 217 residues: Somatotropin (217 aa).

A signal peptide spans 1-26; it reads MMAAGPRTSLLLAFALLCLPWTQVVG. His46 is a binding site for Zn(2+). A disulfide bridge links Cys79 with Cys190. Ser132 is subject to Phosphoserine. A Zn(2+)-binding site is contributed by Glu199. An intrachain disulfide couples Cys207 to Cys215.

This sequence belongs to the somatotropin/prolactin family.

The protein resides in the secreted. Functionally, plays an important role in growth control. Its major role in stimulating body growth is to stimulate the liver and other tissues to secrete IGF1. It stimulates both the differentiation and proliferation of myoblasts. It also stimulates amino acid uptake and protein synthesis in muscle and other tissues. In Bos taurus (Bovine), this protein is Somatotropin (GH1).